A 124-amino-acid polypeptide reads, in one-letter code: Small ribosomal subunit protein uS12 (124 aa).

Residue D89 is modified to 3-methylthioaspartic acid.

It belongs to the universal ribosomal protein uS12 family. As to quaternary structure, part of the 30S ribosomal subunit. Contacts proteins S8 and S17. May interact with IF1 in the 30S initiation complex.

Functionally, with S4 and S5 plays an important role in translational accuracy. Its function is as follows. Interacts with and stabilizes bases of the 16S rRNA that are involved in tRNA selection in the A site and with the mRNA backbone. Located at the interface of the 30S and 50S subunits, it traverses the body of the 30S subunit contacting proteins on the other side and probably holding the rRNA structure together. The combined cluster of proteins S8, S12 and S17 appears to hold together the shoulder and platform of the 30S subunit. This chain is Small ribosomal subunit protein uS12, found in Moorella thermoacetica (strain ATCC 39073 / JCM 9320).